The following is a 485-amino-acid chain: ATP synthase subunit beta (485 aa).

170-177 (GGAGVGKT) is a binding site for ATP.

The protein belongs to the ATPase alpha/beta chains family. In terms of assembly, F-type ATPases have 2 components, CF(1) - the catalytic core - and CF(0) - the membrane proton channel. CF(1) has five subunits: alpha(3), beta(3), gamma(1), delta(1), epsilon(1). CF(0) has three main subunits: a(1), b(2) and c(9-12). The alpha and beta chains form an alternating ring which encloses part of the gamma chain. CF(1) is attached to CF(0) by a central stalk formed by the gamma and epsilon chains, while a peripheral stalk is formed by the delta and b chains.

It is found in the cell membrane. It catalyses the reaction ATP + H2O + 4 H(+)(in) = ADP + phosphate + 5 H(+)(out). Produces ATP from ADP in the presence of a proton gradient across the membrane. The catalytic sites are hosted primarily by the beta subunits. In Salinispora arenicola (strain CNS-205), this protein is ATP synthase subunit beta.